Reading from the N-terminus, the 286-residue chain is Rhomboid-type serine protease 2 (286 aa).

6 consecutive transmembrane segments (helical) span residues 18-38 (ITQY…LLVI), 66-86 (SFYL…VGLF), 99-119 (VFTG…FCIV), 122-142 (LLYP…FMSF), 164-183 (VSIP…MVLI), and 188-210 (FWGH…KFLY). The Nucleophile role is filled by S133. The active site involves H191.

Belongs to the peptidase S54 family.

The protein resides in the golgi apparatus membrane. It localises to the golgi apparatus. The protein localises to the cis-Golgi network membrane. The catalysed reaction is Cleaves type-1 transmembrane domains using a catalytic dyad composed of serine and histidine that are contributed by different transmembrane domains.. In terms of biological role, probable rhomboid-type serine protease that catalyzes intramembrane proteolysis. This is Rhomboid-type serine protease 2 (RBD2) from Debaryomyces hansenii (strain ATCC 36239 / CBS 767 / BCRC 21394 / JCM 1990 / NBRC 0083 / IGC 2968) (Yeast).